A 610-amino-acid polypeptide reads, in one-letter code: MTIKFLSESTINRIAAGEVIERPASVVKELVENAVDASSTKIDIILERAGKNLIIISDDGIGMTDKELEIAVERHTTSKFDESDFLNINTFGFRGEALPSIAAISKMLITSKKRDADKAFQIKLIGGNEKQVTISVHNEGTKIEIRDLFFATPARLKFLRADKTELTATVDVVKKIALAHPKISFSLTHDGKNLLKLKGQNKDAETNLKQRIIDVIGDDFIKNAAYIDFKTPDFSICGYTSSPTYNRASSEDQFLFINNRPVKDKLLQVALRVAYQDYLARDRYPICAIFLQIDPQLVDVNVHPAKAEVRFHDPNYVRNLLIEAIKNALTNKSHVTSTTIASDVLELFKNPLVNKQSPVSKVINVNSKSADYRPTTHSTLNTVPQNHVCQKLIDTLSHAKIEQEVENRIEHEQQTRKQYKLGAAKAQLHTTYIISQTEDSIVITDQHAAHERLGYEKIKDYLKTEELIKQRLLIPEIVELPNEKKADCLYDHREKLYKLGLTLEKFGEKSIIVTEIPNILGDVNVQKLIQDLADHLSDFGKNIALTELIEHVTETYACHYSIRAGRKLSADEMNALLRQMENTPLSGQCNHGRPTYIELKLKDIERLFGR.

The protein belongs to the DNA mismatch repair MutL/HexB family.

Functionally, this protein is involved in the repair of mismatches in DNA. It is required for dam-dependent methyl-directed DNA mismatch repair. May act as a 'molecular matchmaker', a protein that promotes the formation of a stable complex between two or more DNA-binding proteins in an ATP-dependent manner without itself being part of a final effector complex. This Rickettsia conorii (strain ATCC VR-613 / Malish 7) protein is DNA mismatch repair protein MutL.